Here is a 248-residue protein sequence, read N- to C-terminus: 3-deoxy-manno-octulosonate cytidylyltransferase (248 aa).

Belongs to the KdsB family.

The protein resides in the cytoplasm. The catalysed reaction is 3-deoxy-alpha-D-manno-oct-2-ulosonate + CTP = CMP-3-deoxy-beta-D-manno-octulosonate + diphosphate. It functions in the pathway nucleotide-sugar biosynthesis; CMP-3-deoxy-D-manno-octulosonate biosynthesis; CMP-3-deoxy-D-manno-octulosonate from 3-deoxy-D-manno-octulosonate and CTP: step 1/1. Its pathway is bacterial outer membrane biogenesis; lipopolysaccharide biosynthesis. In terms of biological role, activates KDO (a required 8-carbon sugar) for incorporation into bacterial lipopolysaccharide in Gram-negative bacteria. The protein is 3-deoxy-manno-octulosonate cytidylyltransferase of Klebsiella pneumoniae (strain 342).